Consider the following 371-residue polypeptide: Queuine tRNA-ribosyltransferase (371 aa).

D90 functions as the Proton acceptor in the catalytic mechanism. Substrate-binding positions include D90–F94, D144, Q189, and G215. An RNA binding region spans residues G246–N252. D265 serves as the catalytic Nucleophile. Positions T270 to R274 are RNA binding; important for wobble base 34 recognition. The Zn(2+) site is built by C303, C305, C308, and H334.

The protein belongs to the queuine tRNA-ribosyltransferase family. Homodimer. Within each dimer, one monomer is responsible for RNA recognition and catalysis, while the other monomer binds to the replacement base PreQ1. Zn(2+) is required as a cofactor.

It catalyses the reaction 7-aminomethyl-7-carbaguanine + guanosine(34) in tRNA = 7-aminomethyl-7-carbaguanosine(34) in tRNA + guanine. The protein operates within tRNA modification; tRNA-queuosine biosynthesis. Functionally, catalyzes the base-exchange of a guanine (G) residue with the queuine precursor 7-aminomethyl-7-deazaguanine (PreQ1) at position 34 (anticodon wobble position) in tRNAs with GU(N) anticodons (tRNA-Asp, -Asn, -His and -Tyr). Catalysis occurs through a double-displacement mechanism. The nucleophile active site attacks the C1' of nucleotide 34 to detach the guanine base from the RNA, forming a covalent enzyme-RNA intermediate. The proton acceptor active site deprotonates the incoming PreQ1, allowing a nucleophilic attack on the C1' of the ribose to form the product. After dissociation, two additional enzymatic reactions on the tRNA convert PreQ1 to queuine (Q), resulting in the hypermodified nucleoside queuosine (7-(((4,5-cis-dihydroxy-2-cyclopenten-1-yl)amino)methyl)-7-deazaguanosine). This is Queuine tRNA-ribosyltransferase from Helicobacter pylori (strain P12).